The chain runs to 363 residues: Protein-arginine kinase (363 aa).

One can recognise a Phosphagen kinase C-terminal domain in the interval 24-255 (IVLSSRIRLA…QQLIAQERAA (232 aa)). ATP is bound by residues 27-31 (SSRIR), His92, Arg126, 177-181 (RASVM), and 208-213 (RGTYGE). Positions 338–343 (RDVRRA) match the RDXXRA motif of the pArg binding pocket involved in allosteric regulation motif.

Belongs to the ATP:guanido phosphotransferase family.

The catalysed reaction is L-arginyl-[protein] + ATP = N(omega)-phospho-L-arginyl-[protein] + ADP + H(+). With respect to regulation, appears to be allosterically activated by the binding of pArg-containing polypeptides to the pArg-binding pocket localized in the C-terminal domain of McsB. In terms of biological role, catalyzes the specific phosphorylation of arginine residues in a large number of proteins. Is part of the bacterial stress response system. Protein arginine phosphorylation has a physiologically important role and is involved in the regulation of many critical cellular processes, such as protein homeostasis, motility, competence, and stringent and stress responses, by regulating gene expression and protein activity. The polypeptide is Protein-arginine kinase (Geobacillus thermodenitrificans (strain NG80-2)).